The chain runs to 168 residues: METPESEKTRFEVECEFVQALANPNYLNFLAQRGYFKEEYFVNYLKYLLYWKNPQYARCLKFPQCLHMLEALQSQQFRDAMAYGPSAKFVEDQVVLQWQFYLRKRHRLCMLPEGEDQDVEESEEETVENEQKESEDEEDVVIVEKPEDEQEEQAEEAAEPTDTSLLNT.

The segment covering 113–159 (EGEDQDVEESEEETVENEQKESEDEEDVVIVEKPEDEQEEQAEEAAE) has biased composition (acidic residues). A disordered region spans residues 113 to 168 (EGEDQDVEESEEETVENEQKESEDEEDVVIVEKPEDEQEEQAEEAAEPTDTSLLNT).

Belongs to the Mediator complex subunit 31 family. In terms of assembly, component of the Mediator complex.

Its subcellular location is the nucleus. Component of the Mediator complex, a coactivator involved in the regulated transcription of nearly all RNA polymerase II-dependent genes. Mediator functions as a bridge to convey information from gene-specific regulatory proteins to the basal RNA polymerase II transcription machinery. Mediator is recruited to promoters by direct interactions with regulatory proteins and serves as a scaffold for the assembly of a functional preinitiation complex with RNA polymerase II and the general transcription factors. This is Mediator of RNA polymerase II transcription subunit 31 (mdt-31) from Caenorhabditis briggsae.